Reading from the N-terminus, the 430-residue chain is Adenylosuccinate synthetase (430 aa).

GTP-binding positions include 11-17 (GDEGKGK) and 39-41 (GHS). Asp-12 serves as the catalytic Proton acceptor. Mg(2+) contacts are provided by Asp-12 and Gly-39. IMP contacts are provided by residues 12 to 15 (DEGK), 37 to 40 (NAGH), Thr-129, Arg-143, Asn-221, Thr-236, and Arg-300. The active-site Proton donor is the His-40. 296-302 (VSTGRKR) provides a ligand contact to substrate. Residues Arg-302, 328–330 (KLD), and 412–414 (GTG) contribute to the GTP site.

It belongs to the adenylosuccinate synthetase family. In terms of assembly, homodimer. Requires Mg(2+) as cofactor.

Its subcellular location is the cytoplasm. It catalyses the reaction IMP + L-aspartate + GTP = N(6)-(1,2-dicarboxyethyl)-AMP + GDP + phosphate + 2 H(+). It participates in purine metabolism; AMP biosynthesis via de novo pathway; AMP from IMP: step 1/2. Plays an important role in the de novo pathway and in the salvage pathway of purine nucleotide biosynthesis. Catalyzes the first committed step in the biosynthesis of AMP from IMP. In Sordaria macrospora (strain ATCC MYA-333 / DSM 997 / K(L3346) / K-hell), this protein is Adenylosuccinate synthetase.